A 437-amino-acid polypeptide reads, in one-letter code: Adenylosuccinate synthetase 1 (437 aa).

Residues 13-19 (GDEGKGK) and 41-43 (GHT) contribute to the GTP site. Catalysis depends on D14, which acts as the Proton acceptor. Residues D14 and G41 each contribute to the Mg(2+) site. Residues 14–17 (DEGK), 39–42 (NAGH), T130, R144, Q225, T240, and R310 each bind IMP. H42 (proton donor) is an active-site residue. 306 to 312 (ATTGRLR) contacts substrate. GTP contacts are provided by residues R312, 338–340 (KLD), and 421–423 (STG).

The protein belongs to the adenylosuccinate synthetase family. Homodimer. Requires Mg(2+) as cofactor.

It is found in the cytoplasm. It carries out the reaction IMP + L-aspartate + GTP = N(6)-(1,2-dicarboxyethyl)-AMP + GDP + phosphate + 2 H(+). Its pathway is purine metabolism; AMP biosynthesis via de novo pathway; AMP from IMP: step 1/2. Functionally, plays an important role in the de novo pathway of purine nucleotide biosynthesis. Catalyzes the first committed step in the biosynthesis of AMP from IMP. This chain is Adenylosuccinate synthetase 1, found in Pseudoalteromonas translucida (strain TAC 125).